The following is a 253-amino-acid chain: Phosphate import ATP-binding protein PstB (253 aa).

An ABC transporter domain is found at 8–248 (IQVRDLDLFY…PRDKRTEDYI (241 aa)). 40 to 47 (GPSGCGKS) is a binding site for ATP.

This sequence belongs to the ABC transporter superfamily. Phosphate importer (TC 3.A.1.7) family. The complex is composed of two ATP-binding proteins (PstB), two transmembrane proteins (PstC and PstA) and a solute-binding protein (PstS).

The protein localises to the cell membrane. The enzyme catalyses phosphate(out) + ATP + H2O = ADP + 2 phosphate(in) + H(+). In terms of biological role, part of the ABC transporter complex PstSACB involved in phosphate import. Responsible for energy coupling to the transport system. The sequence is that of Phosphate import ATP-binding protein PstB from Clostridium perfringens (strain ATCC 13124 / DSM 756 / JCM 1290 / NCIMB 6125 / NCTC 8237 / Type A).